The chain runs to 175 residues: Crossover junction endodeoxyribonuclease RuvC (175 aa).

Catalysis depends on residues D16, E76, and D148. Mg(2+) is bound by residues D16, E76, and D148.

It belongs to the RuvC family. Homodimer which binds Holliday junction (HJ) DNA. The HJ becomes 2-fold symmetrical on binding to RuvC with unstacked arms; it has a different conformation from HJ DNA in complex with RuvA. In the full resolvosome a probable DNA-RuvA(4)-RuvB(12)-RuvC(2) complex forms which resolves the HJ. It depends on Mg(2+) as a cofactor.

It localises to the cytoplasm. The catalysed reaction is Endonucleolytic cleavage at a junction such as a reciprocal single-stranded crossover between two homologous DNA duplexes (Holliday junction).. In terms of biological role, the RuvA-RuvB-RuvC complex processes Holliday junction (HJ) DNA during genetic recombination and DNA repair. Endonuclease that resolves HJ intermediates. Cleaves cruciform DNA by making single-stranded nicks across the HJ at symmetrical positions within the homologous arms, yielding a 5'-phosphate and a 3'-hydroxyl group; requires a central core of homology in the junction. The consensus cleavage sequence is 5'-(A/T)TT(C/G)-3'. Cleavage occurs on the 3'-side of the TT dinucleotide at the point of strand exchange. HJ branch migration catalyzed by RuvA-RuvB allows RuvC to scan DNA until it finds its consensus sequence, where it cleaves and resolves the cruciform DNA. The protein is Crossover junction endodeoxyribonuclease RuvC of Bradyrhizobium sp. (strain ORS 278).